Reading from the N-terminus, the 235-residue chain is Elongation factor Tu, chloroplastic (235 aa).

The region spanning 1–125 (KNMITGAAQM…AVDEYIPTPV (125 aa)) is the tr-type G domain. Residue 47–50 (NKQD) participates in GTP binding.

This sequence belongs to the TRAFAC class translation factor GTPase superfamily. Classic translation factor GTPase family. EF-Tu/EF-1A subfamily.

The protein resides in the plastid. It is found in the chloroplast. It carries out the reaction GTP + H2O = GDP + phosphate + H(+). Functionally, GTP hydrolase that promotes the GTP-dependent binding of aminoacyl-tRNA to the A-site of ribosomes during protein biosynthesis. The sequence is that of Elongation factor Tu, chloroplastic (tufA) from Gracilariopsis lemaneiformis (Red alga).